Reading from the N-terminus, the 381-residue chain is L-lactate dehydrogenase A-like 6B (381 aa).

Residues 101-106 (DLDEDK) and Arg148 contribute to the NAD(+) site. Substrate is bound by residues Arg155, Asn187, and Arg218. Asn187 is an NAD(+) binding site. Residue His242 is the Proton acceptor of the active site. Position 297 (Thr297) interacts with substrate.

It belongs to the LDH/MDH superfamily. LDH family. As to expression, testis specific.

The enzyme catalyses (S)-lactate + NAD(+) = pyruvate + NADH + H(+). Its pathway is fermentation; pyruvate fermentation to lactate; (S)-lactate from pyruvate: step 1/1. This is L-lactate dehydrogenase A-like 6B (LDHAL6B) from Homo sapiens (Human).